A 930-amino-acid chain; its full sequence is Isoleucine--tRNA ligase (930 aa).

A 'HIGH' region motif is present at residues 57-67 (PYANGNIHVGH). Glu-554 contacts L-isoleucyl-5'-AMP. A 'KMSKS' region motif is present at residues 595 to 599 (KMSKS). Lys-598 provides a ligand contact to ATP. Zn(2+)-binding residues include Cys-888, Cys-891, Cys-908, and Cys-911.

It belongs to the class-I aminoacyl-tRNA synthetase family. IleS type 1 subfamily. Monomer. It depends on Zn(2+) as a cofactor.

The protein resides in the cytoplasm. It carries out the reaction tRNA(Ile) + L-isoleucine + ATP = L-isoleucyl-tRNA(Ile) + AMP + diphosphate. Its function is as follows. Catalyzes the attachment of isoleucine to tRNA(Ile). As IleRS can inadvertently accommodate and process structurally similar amino acids such as valine, to avoid such errors it has two additional distinct tRNA(Ile)-dependent editing activities. One activity is designated as 'pretransfer' editing and involves the hydrolysis of activated Val-AMP. The other activity is designated 'posttransfer' editing and involves deacylation of mischarged Val-tRNA(Ile). The chain is Isoleucine--tRNA ligase from Streptococcus mutans serotype c (strain ATCC 700610 / UA159).